The sequence spans 210 residues: Probable GTP-binding protein EngB (210 aa).

The EngB-type G domain maps to 25-199; it reads RGIEVAFAGR…RQKLDSWFSE (175 aa). GTP contacts are provided by residues 33 to 40, 60 to 64, 78 to 81, 145 to 148, and 178 to 180; these read GRSNAGKS, GRTQL, DLPG, TKAD, and FSS. S40 and T62 together coordinate Mg(2+).

The protein belongs to the TRAFAC class TrmE-Era-EngA-EngB-Septin-like GTPase superfamily. EngB GTPase family. The cofactor is Mg(2+).

In terms of biological role, necessary for normal cell division and for the maintenance of normal septation. The sequence is that of Probable GTP-binding protein EngB from Salmonella paratyphi B (strain ATCC BAA-1250 / SPB7).